A 261-amino-acid polypeptide reads, in one-letter code: Probable cyclic nucleotide phosphodiesterase PSM_A2567 (261 aa).

Residues D22, H24, D62, N94, H160, H198, and H200 each contribute to the Fe cation site. AMP-binding positions include H24, D62, and 94–95 (NH). H200 is an AMP binding site.

It belongs to the cyclic nucleotide phosphodiesterase class-III family. It depends on Fe(2+) as a cofactor.

This chain is Probable cyclic nucleotide phosphodiesterase PSM_A2567, found in Pseudoalteromonas sp. (strain SM9913).